The following is a 247-amino-acid chain: Myeloid leukemia factor 2 (247 aa).

The interval 122–247 is disordered; it reads ETSEMRSAPG…PSRQSRRYDW (126 aa). The span at 134–144 shows a compositional bias: basic and acidic residues; sequence RETRRTVRDSD. Positions 154–169 are enriched in basic residues; the sequence is HHIRDRAHILQRSRNH. Over residues 170–179 the composition is skewed to basic and acidic residues; it reads RTGDQEERQD. Over residues 182 to 192 the composition is skewed to acidic residues; it reads NLDESEAAAFD. Over residues 193 to 225 the composition is skewed to basic and acidic residues; it reads DEWRRETSRYRQQRPLEFRRHEASVGGGRRAEG. Residues S216, S237, and S239 each carry the phosphoserine modification.

The protein belongs to the MLF family.

It localises to the cytoplasm. It is found in the nucleus. The chain is Myeloid leukemia factor 2 (Mlf2) from Mus musculus (Mouse).